Reading from the N-terminus, the 187-residue chain is Thioredoxin F, chloroplastic (187 aa).

A chloroplast-targeting transit peptide spans 1-72 (MALRLSVSSS…GSDTATVGAE (72 aa)). Residues 73–186 (AEAVAVTGQV…LIQAIETVKS (114 aa)) form the Thioredoxin domain. Catalysis depends on nucleophile residues Cys111 and Cys114. Cys111 and Cys114 are oxidised to a cystine.

The protein belongs to the thioredoxin family. Plant F-type subfamily.

Its subcellular location is the plastid. The protein localises to the chloroplast. Functionally, thiol-disulfide oxidoreductase involved in the redox regulation of enzymes of both reductive pentose phosphate pathway (Calvin-Benson cycle) and oxidative pentose phosphate pathway. This chain is Thioredoxin F, chloroplastic, found in Oryza sativa subsp. japonica (Rice).